The following is a 389-amino-acid chain: Succinate--CoA ligase [ADP-forming] subunit beta (389 aa).

The ATP-grasp domain maps to 9-244; it reads KQLFADYGLP…PSQEDERERR (236 aa). ATP contacts are provided by residues lysine 46, 53 to 55, glutamate 99, threonine 102, and glutamate 107; that span reads GRG. Mg(2+) is bound by residues asparagine 199 and aspartate 213. Substrate contacts are provided by residues asparagine 264 and 321 to 323; that span reads GIV.

It belongs to the succinate/malate CoA ligase beta subunit family. Heterotetramer of two alpha and two beta subunits. It depends on Mg(2+) as a cofactor.

The enzyme catalyses succinate + ATP + CoA = succinyl-CoA + ADP + phosphate. The catalysed reaction is GTP + succinate + CoA = succinyl-CoA + GDP + phosphate. It functions in the pathway carbohydrate metabolism; tricarboxylic acid cycle; succinate from succinyl-CoA (ligase route): step 1/1. Functionally, succinyl-CoA synthetase functions in the citric acid cycle (TCA), coupling the hydrolysis of succinyl-CoA to the synthesis of either ATP or GTP and thus represents the only step of substrate-level phosphorylation in the TCA. The beta subunit provides nucleotide specificity of the enzyme and binds the substrate succinate, while the binding sites for coenzyme A and phosphate are found in the alpha subunit. The chain is Succinate--CoA ligase [ADP-forming] subunit beta from Alcanivorax borkumensis (strain ATCC 700651 / DSM 11573 / NCIMB 13689 / SK2).